The primary structure comprises 506 residues: MNIKSVVLCILDGWGNGIENNKYNAISNANPPCWQYISSNYPKCSLSACGADVGLPGGQIGNSEVGHMNIGSGRVVIQSLQRINQEIGTIENNVNLQSFINDLKSKNGVCHIMGLVSDGGVHSHQKHISTLANKISQHGIKVVIHAFLDGRDTLPNSGKKCIQEFTKSIKGNDTRIATVSGRYYAMDRDNRWKRTIEAYEAIAFAKAPCHDNAVSLIENNYQNNITDEFIRPAVIGDYQGIKPEDGVLLANFRADRMIQLASILLGKTDYAKVAKFSSILSMMKYKEDLKIPYIFPPTSFADTLGQTIEDNKLRQLRIAETEKYAHVTFFFNCGKEEPFSGEERILIPSPKVQTYDLQPEMSAFELTEKLVEKIHSQEFALIVVNYANPDMVGHTGNIKAAEKAVLAVDDCLAKVLNAVKKSSNTALIVTADHGNVECMFDEENNTPHTAHTLNKVPFIVSCDNLKLRDGRLSDIAPTILQLLGIKKPNEMTGSSLISCITLCHSS.

The Mn(2+) site is built by D12 and S63. S63 acts as the Phosphoserine intermediate in catalysis. Substrate contacts are provided by residues H122, 151–152 (RD), R182, R188, 253–256 (RADR), and K323. D390, H394, D432, H433, and H451 together coordinate Mn(2+).

This sequence belongs to the BPG-independent phosphoglycerate mutase family. Monomer. Mn(2+) is required as a cofactor.

It carries out the reaction (2R)-2-phosphoglycerate = (2R)-3-phosphoglycerate. It functions in the pathway carbohydrate degradation; glycolysis; pyruvate from D-glyceraldehyde 3-phosphate: step 3/5. Functionally, catalyzes the interconversion of 2-phosphoglycerate and 3-phosphoglycerate. The sequence is that of 2,3-bisphosphoglycerate-independent phosphoglycerate mutase from Wolbachia pipientis wMel.